A 75-amino-acid polypeptide reads, in one-letter code: Small ribosomal subunit protein bS16 (75 aa).

This sequence belongs to the bacterial ribosomal protein bS16 family.

This Campylobacter lari (strain RM2100 / D67 / ATCC BAA-1060) protein is Small ribosomal subunit protein bS16.